Consider the following 302-residue polypeptide: uncharacterized protein (302 aa).

Its function is as follows. May be a membrane-bound protein, possibly involved in IAA or IAA-Lysine transport. This is an uncharacterized protein from Pseudomonas savastanoi (Pseudomonas syringae pv. savastanoi).